The sequence spans 202 residues: Matrix protein (202 aa).

The PPXY motif motif lies at 35-38; the sequence is PPEY. An essential for glycoprotein binding region spans residues 115–151; the sequence is KIRRTLVFQWAESSGPLDGEELEYSQEITWDDDSEFV.

Belongs to the lyssavirus matrix protein family. Homomultimer. Interacts with nucleoprotein and with the cytoplasmic domain of glycoprotein.

It localises to the virion membrane. The protein resides in the host endomembrane system. In terms of biological role, plays a major role in assembly and budding of virion. Completely covers the ribonucleoprotein coil and keep it in condensed bullet-shaped form. Inhibits viral transcription and stimulates replication. Plays a major role in early induction of TRAIL-mediated apoptosis in infected neurons. This chain is Matrix protein (M), found in Irkut virus (IRKV).